The chain runs to 274 residues: Serine protease 28 (274 aa).

A signal peptide spans 1 to 26; that stretch reads MFRLLLLALSCLESTVFMASVSISRS. The Peptidase S1 domain occupies 31–274; the sequence is IVGGQRTPPG…SLAWIHQHIQ (244 aa). C62 and C78 are oxidised to a cystine. The active-site Charge relay system is the H77. N106 carries an N-linked (GlcNAc...) asparagine glycan. The active-site Charge relay system is the D124. Intrachain disulfides connect C158–C233, C191–C214, and C223–C251. Residue S227 is the Charge relay system of the active site.

Belongs to the peptidase S1 family. As to quaternary structure, homooligomer, heterodimer and heterotetramer. Able to form homo- and hetero- tetrameric structures. Heterotetramer is far more stable than the homotetramer. Expressed in embryos throughout the preimplantation period, during blastocyst hatching and embryo outgrowth. Found in uterus especially in glandular epithelium.

It is found in the secreted. Its activity is regulated as follows. Inhibited by benzamidine, (4-amidino-phenyl)-methane-sulfonyl (APMSF), N-p-tosyl-L-lysine chloromethylketone (TLCK), gabexate, mesylate, BABIM and trypsin soybean inhibitor (TSI). In terms of biological role, involved in embryo hatching and implantation. The chain is Serine protease 28 (Prss28) from Mus musculus (Mouse).